A 244-amino-acid chain; its full sequence is tRNA1(Val) (adenine(37)-N6)-methyltransferase (244 aa).

This sequence belongs to the methyltransferase superfamily. tRNA (adenine-N(6)-)-methyltransferase family.

Its subcellular location is the cytoplasm. It catalyses the reaction adenosine(37) in tRNA1(Val) + S-adenosyl-L-methionine = N(6)-methyladenosine(37) in tRNA1(Val) + S-adenosyl-L-homocysteine + H(+). Functionally, specifically methylates the adenine in position 37 of tRNA(1)(Val) (anticodon cmo5UAC). The polypeptide is tRNA1(Val) (adenine(37)-N6)-methyltransferase (Photorhabdus laumondii subsp. laumondii (strain DSM 15139 / CIP 105565 / TT01) (Photorhabdus luminescens subsp. laumondii)).